Here is a 541-residue protein sequence, read N- to C-terminus: Methyl-accepting chemotaxis protein PcaY (541 aa).

Residues 1–10 lie on the Cytoplasmic side of the membrane; sequence MLANLKIRTG. A helical transmembrane segment spans residues 11 to 31; the sequence is MFWVLSLFSLTLLFSTASAWW. The Periplasmic segment spans residues 32-189; that stretch reads AAVGSDQQIT…ESDRRLARAQ (158 aa). Positions 35 to 187 are ligand-binding domain; the sequence is GSDQQITELD…MLESDRRLAR (153 aa). A helical transmembrane segment spans residues 190-210; the sequence is LLSLCLLGMTVVLAVLCWAFI. Residues 211-541 lie on the Cytoplasmic side of the membrane; that stretch reads AQRVLHPLRE…MTALVGRFKV (331 aa). Residues 212–264 form the HAMP domain; sequence QRVLHPLREAGGHFRRIASGDLSVPVQGQGNNEIGQLFHELQRMQQSQRDTLG. Residues 269-505 enclose the Methyl-accepting transducer domain; that stretch reads CARQLDAAAS…EVDRNLLNIR (237 aa). Residues 322–341 are disordered; sequence TSQTTSESNQLAAQSRRQVS.

The protein belongs to the methyl-accepting chemotaxis (MCP) protein family.

It localises to the cell inner membrane. Its function is as follows. Chemotactic-signal transducers respond to changes in the concentration of attractants and repellents in the environment, transduce a signal from the outside to the inside of the cell, and facilitate sensory adaptation through the variation of the level of methylation. PcaY is responsible for the detection of multiple aromatic and hydroaromatic compounds that are metabolized through the beta-ketoadipate catabolic pathway, including vanillin, vanillate, 4-hydroxybenzoate (4-HBA), benzoate and protocatechuate. It also senses several nonmetabolizable aromatic compounds. This chain is Methyl-accepting chemotaxis protein PcaY, found in Pseudomonas putida (strain ATCC 700007 / DSM 6899 / JCM 31910 / BCRC 17059 / LMG 24140 / F1).